A 458-amino-acid polypeptide reads, in one-letter code: UDP-N-acetylmuramoylalanine--D-glutamate ligase (458 aa).

124–130 contributes to the ATP binding site; sequence GSDGKTT.

It belongs to the MurCDEF family.

It is found in the cytoplasm. The enzyme catalyses UDP-N-acetyl-alpha-D-muramoyl-L-alanine + D-glutamate + ATP = UDP-N-acetyl-alpha-D-muramoyl-L-alanyl-D-glutamate + ADP + phosphate + H(+). It functions in the pathway cell wall biogenesis; peptidoglycan biosynthesis. Its function is as follows. Cell wall formation. Catalyzes the addition of glutamate to the nucleotide precursor UDP-N-acetylmuramoyl-L-alanine (UMA). The protein is UDP-N-acetylmuramoylalanine--D-glutamate ligase of Clostridium botulinum (strain Langeland / NCTC 10281 / Type F).